Here is a 231-residue protein sequence, read N- to C-terminus: Phosphatidate cytidylyltransferase (231 aa).

Transmembrane regions (helical) follow at residues 33–53, 67–87, 95–115, 133–153, 167–187, and 206–226; these read FVVAILWLKPLFYVLMILVAI, IMYLLIGLIIIPIPISLLIFL, WLIMLYFCIVWSVDIFAMIGG, WSGLITGILSAGLVATLISFI, IYLFIISCTLALTAQLSDLFI, and HGGVLDRFDSIILTAPILFFI.

Belongs to the CDS family.

It localises to the cell membrane. The enzyme catalyses a 1,2-diacyl-sn-glycero-3-phosphate + CTP + H(+) = a CDP-1,2-diacyl-sn-glycerol + diphosphate. It participates in phospholipid metabolism; CDP-diacylglycerol biosynthesis; CDP-diacylglycerol from sn-glycerol 3-phosphate: step 3/3. This Rickettsia bellii (strain RML369-C) protein is Phosphatidate cytidylyltransferase (cdsA).